The primary structure comprises 143 residues: uncharacterized protein (143 aa).

It is found in the cytoplasm. The protein localises to the nucleus. This is an uncharacterized protein from Schizosaccharomyces pombe (strain 972 / ATCC 24843) (Fission yeast).